The sequence spans 451 residues: MSTAINSVEMSLSADEIRERVRAAGVVGAGGAGFPAHVKLQAQVEIFLVNAAECEPMLKVDQQLMWQQAARLVRGVQYAMTATGAREGVIALKEKYRRAIDALTPLLPDGIRLHILPDVYPAGDEVLTIWMATGRRVAPAALPASVGVVVNNVQTVLNIARAVEQRFPVTRRTLTVNGAVARPLTVTVPIGMSLREVLALAGGATVDDPGFINGGPMMGGLITSLDNPVTKTTGGLLVLPKSHPLIQRRMQDERTVLSVARTVCEQCRLCTDLCPRHLIGHELSPHLLVRAVNFHQAATPQLLLSALTCSECNVCESVACPVGISPMRINRMLKRELRAQNQRYEGPLNPADEMAKYRLVPVKRLIAKLGLSPWYQEAPLVEEEPSVEKVTLQLRQHIGASAVANVAVGERVTRGQCVADVPPGALGAPIHASIDGVVSAISEQAITVVRG.

4Fe-4S ferredoxin-type domains are found at residues Thr-255–Ser-284 and Pro-300–Asn-330. 8 residues coordinate [4Fe-4S] cluster: Cys-264, Cys-267, Cys-270, Cys-274, Cys-309, Cys-312, Cys-315, and Cys-320.

This sequence belongs to the PduS cobalamin reductase family. As to quaternary structure, monomeric when purified anaerobically, dimeric under aerobic conditions. Forms a complex with PduO. Interacts with PduT, probably via the N-terminus of PduS. Requires [4Fe-4S] cluster as cofactor. The cofactor is FMN.

The protein resides in the bacterial microcompartment. It participates in polyol metabolism; 1,2-propanediol degradation. Functionally, a protein that aids in conversion of cob(III)alamin to cob(II)alamin and then to cob(I)alamin in the bacterial microcompartment (BMC) dedicated to 1,2-propanediol (1,2-PD) degradation. The latter step requires PduO. No free cob(I)alamin is released, suggesting a complex is formed with PduO that finishes conversion to adenosylcobalamin. PduS and PduO allow regeneration of the adenosylcobalamin cofactor within the BMC. Another study showed reduction of cob(II)alamin to cob(I)alamin in the absence of PduO. Both reactions require NADH. Cyanocobalamin (CN-Cbl) is not a substrate for the first reaction. Cobalamin reduction probably occurs spontaneously in the presence of free reduced flavin nucleotides, this protein may be involved in electron transfer for this reduction. In terms of biological role, the 1,2-PD-specific bacterial microcompartment (BMC) concentrates low levels of 1,2-PD catabolic enzymes, concentrates volatile reaction intermediates thus enhancing pathway flux and keeps the level of toxic, mutagenic propionaldehyde low. This Salmonella typhimurium (strain LT2 / SGSC1412 / ATCC 700720) protein is Cobalamin reductase PduS.